The sequence spans 544 residues: Methyl-accepting chemotaxis protein McpP (544 aa).

3 helical membrane-spanning segments follow: residues 12-32 (RLWLILVVAVAMLVVLGLLML), 50-70 (VVQTAAGVLAYYQGLEAAGTL), and 192-212 (DASLVGVGIALLMALVVMLIA). Residues 213-267 (RSIARPLQEAVQAMGNIASGESDLTRRLDTHGSDEITHLGEHFNRFNGKLQGVVG) form the HAMP domain. In terms of domain architecture, Methyl-accepting transducer spans 272–508 (AAHALAQSAG…EINRNVLDTA (237 aa)).

The protein belongs to the methyl-accepting chemotaxis (MCP) protein family.

The protein localises to the cell membrane. Its function is as follows. Chemotactic-signal transducers respond to changes in the concentration of attractants and repellents in the environment, transduce a signal from the outside to the inside of the cell, and facilitate sensory adaptation through the variation of the level of methylation. McpP is a chemoreceptor that responds specifically to some C2 and C3 carboxylic acids. Recognizes acetate, pyruvate, propionate, and L-lactate. In Pseudomonas putida (strain ATCC 47054 / DSM 6125 / CFBP 8728 / NCIMB 11950 / KT2440), this protein is Methyl-accepting chemotaxis protein McpP.